Reading from the N-terminus, the 248-residue chain is Tyrosine recombinase XerD-like (248 aa).

Positions 1–72 constitute a Core-binding (CB) domain; it reads MIAFIEPFLA…TVNQFLYYLY (72 aa). Residues 92-248 form the Tyr recombinase domain; it reads SLKPQLTRLD…PITLEKYYKM (157 aa). Arg213 is an active-site residue. Catalysis depends on Tyr245, which acts as the O-(3'-phospho-DNA)-tyrosine intermediate.

It belongs to the 'phage' integrase family. XerD-like subfamily.

It localises to the cytoplasm. Functionally, putative tyrosine recombinase. Not involved in the cutting and rejoining of the recombining DNA molecules on dif(SL) site. The chain is Tyrosine recombinase XerD-like from Streptococcus equi subsp. zooepidemicus (strain MGCS10565).